A 126-amino-acid polypeptide reads, in one-letter code: Aspartate 1-decarboxylase (126 aa).

S25 functions as the Schiff-base intermediate with substrate; via pyruvic acid in the catalytic mechanism. Position 25 is a pyruvic acid (Ser) (S25). Position 57 (T57) interacts with substrate. Y58 acts as the Proton donor in catalysis. 73-75 serves as a coordination point for substrate; sequence GAA.

It belongs to the PanD family. As to quaternary structure, heterooctamer of four alpha and four beta subunits. The cofactor is pyruvate. In terms of processing, is synthesized initially as an inactive proenzyme, which is activated by self-cleavage at a specific serine bond to produce a beta-subunit with a hydroxyl group at its C-terminus and an alpha-subunit with a pyruvoyl group at its N-terminus.

Its subcellular location is the cytoplasm. It catalyses the reaction L-aspartate + H(+) = beta-alanine + CO2. It functions in the pathway cofactor biosynthesis; (R)-pantothenate biosynthesis; beta-alanine from L-aspartate: step 1/1. In terms of biological role, catalyzes the pyruvoyl-dependent decarboxylation of aspartate to produce beta-alanine. The protein is Aspartate 1-decarboxylase of Photorhabdus laumondii subsp. laumondii (strain DSM 15139 / CIP 105565 / TT01) (Photorhabdus luminescens subsp. laumondii).